A 104-amino-acid polypeptide reads, in one-letter code: uncharacterized protein (104 aa).

This sequence to M.jannaschii MJ1511.

This is an uncharacterized protein from Methanocaldococcus jannaschii (strain ATCC 43067 / DSM 2661 / JAL-1 / JCM 10045 / NBRC 100440) (Methanococcus jannaschii).